A 397-amino-acid chain; its full sequence is Ribosomal RNA large subunit methyltransferase I (397 aa).

Residues 2 to 80 enclose the PUA domain; the sequence is AIRIKLKPGR…KEEAIDADFF (79 aa).

This sequence belongs to the methyltransferase superfamily. RlmI family.

Its subcellular location is the cytoplasm. The catalysed reaction is cytidine(1962) in 23S rRNA + S-adenosyl-L-methionine = 5-methylcytidine(1962) in 23S rRNA + S-adenosyl-L-homocysteine + H(+). Functionally, specifically methylates the cytosine at position 1962 (m5C1962) of 23S rRNA. This Shewanella denitrificans (strain OS217 / ATCC BAA-1090 / DSM 15013) protein is Ribosomal RNA large subunit methyltransferase I.